Here is a 614-residue protein sequence, read N- to C-terminus: UvrABC system protein C (614 aa).

Positions 26–104 (NLPGVYKMLG…IKEHRPPYNV (79 aa)) constitute a GIY-YIG domain. The 36-residue stretch at 215–250 (SDIHTTLIEKMEHSAEALDFEKAAFYRDQLSMLREV) folds into the UVR domain.

This sequence belongs to the UvrC family. Interacts with UvrB in an incision complex.

It localises to the cytoplasm. Its function is as follows. The UvrABC repair system catalyzes the recognition and processing of DNA lesions. UvrC both incises the 5' and 3' sides of the lesion. The N-terminal half is responsible for the 3' incision and the C-terminal half is responsible for the 5' incision. This Psychrobacter sp. (strain PRwf-1) protein is UvrABC system protein C.